Reading from the N-terminus, the 458-residue chain is GTPase Der (458 aa).

2 consecutive EngA-type G domains span residues 3 to 167 (PVVV…PETE) and 176 to 351 (IKLA…AQYT). GTP-binding positions include 9 to 16 (GRPNVGKS), 56 to 60 (DTGGF), 119 to 122 (NKID), 182 to 189 (GRPNVGKS), 229 to 233 (DTAGL), and 294 to 297 (NKWD). A KH-like domain is found at 352–436 (FNIKTGELNN…PIRLFFREKP (85 aa)).

Belongs to the TRAFAC class TrmE-Era-EngA-EngB-Septin-like GTPase superfamily. EngA (Der) GTPase family. In terms of assembly, associates with the 50S ribosomal subunit.

Functionally, GTPase that plays an essential role in the late steps of ribosome biogenesis. The chain is GTPase Der from Desulfosudis oleivorans (strain DSM 6200 / JCM 39069 / Hxd3) (Desulfococcus oleovorans).